A 153-amino-acid polypeptide reads, in one-letter code: Troponin C (153 aa).

4 consecutive EF-hand domains span residues 9 to 44 (EQVQMLRKAFDMFDRDKKGYIHTNMVSTILRTLGQT), 45 to 80 (FEENDLQQLIIEIDADGSGELEFDEFLTLTARFLVE), 85 to 120 (AMQEELREAFRMYDKEGNGYIPTSALREILRALDDK), and 121 to 153 (LTEDELDEMIAEIDTDGSGTVDFDEFMEMMTGD). Residues aspartate 58, aspartate 60, serine 62, glutamate 64, and glutamate 69 each coordinate Ca(2+). Ca(2+)-binding residues include aspartate 134, aspartate 136, serine 138, threonine 140, and glutamate 145.

Belongs to the troponin C family.

Troponin is the central regulatory protein of striated muscle contraction. Tn consists of three components: Tn-I which is the inhibitor of actomyosin ATPase, Tn-T which contains the binding site for tropomyosin and Tn-C. The binding of calcium to Tn-C abolishes the inhibitory action of Tn on actin filaments. The polypeptide is Troponin C (Tyrophagus putrescentiae (Mold mite)).